The chain runs to 358 residues: S-adenosylmethionine decarboxylase proenzyme (358 aa).

Residues glutamate 11 and glutamate 14 contribute to the active site. Residue serine 71 is the Schiff-base intermediate with substrate; via pyruvic acid of the active site. Position 71 is a pyruvic acid (Ser); by autocatalysis (serine 71). Cysteine 85 serves as the catalytic Proton donor; for catalytic activity. Catalysis depends on proton acceptor; for processing activity residues serine 234 and histidine 247.

It belongs to the eukaryotic AdoMetDC family. It depends on pyruvate as a cofactor. Is synthesized initially as an inactive proenzyme. Formation of the active enzyme involves a self-maturation process in which the active site pyruvoyl group is generated from an internal serine residue via an autocatalytic post-translational modification. Two non-identical subunits are generated from the proenzyme in this reaction, and the pyruvate is formed at the N-terminus of the alpha chain, which is derived from the carboxyl end of the proenzyme. The post-translation cleavage follows an unusual pathway, termed non-hydrolytic serinolysis, in which the side chain hydroxyl group of the serine supplies its oxygen atom to form the C-terminus of the beta chain, while the remainder of the serine residue undergoes an oxidative deamination to produce ammonia and the pyruvoyl group blocking the N-terminus of the alpha chain.

The catalysed reaction is S-adenosyl-L-methionine + H(+) = S-adenosyl 3-(methylsulfanyl)propylamine + CO2. The protein operates within amine and polyamine biosynthesis; S-adenosylmethioninamine biosynthesis; S-adenosylmethioninamine from S-adenosyl-L-methionine: step 1/1. This is S-adenosylmethionine decarboxylase proenzyme (SAMDC) from Solanum chilense (Tomato).